The following is a 424-amino-acid chain: Histidine--tRNA ligase (424 aa).

It belongs to the class-II aminoacyl-tRNA synthetase family. In terms of assembly, homodimer.

It localises to the cytoplasm. The enzyme catalyses tRNA(His) + L-histidine + ATP = L-histidyl-tRNA(His) + AMP + diphosphate + H(+). This is Histidine--tRNA ligase from Shewanella denitrificans (strain OS217 / ATCC BAA-1090 / DSM 15013).